Here is a 445-residue protein sequence, read N- to C-terminus: Phosphoglucosamine mutase (445 aa).

The active-site Phosphoserine intermediate is the Ser-102. Residues Ser-102, Asp-241, Asp-243, and Asp-245 each contribute to the Mg(2+) site. Ser-102 carries the phosphoserine modification.

It belongs to the phosphohexose mutase family. Mg(2+) is required as a cofactor. Activated by phosphorylation.

The catalysed reaction is alpha-D-glucosamine 1-phosphate = D-glucosamine 6-phosphate. Its function is as follows. Catalyzes the conversion of glucosamine-6-phosphate to glucosamine-1-phosphate. This Novosphingobium aromaticivorans (strain ATCC 700278 / DSM 12444 / CCUG 56034 / CIP 105152 / NBRC 16084 / F199) protein is Phosphoglucosamine mutase.